The sequence spans 278 residues: MTVLHSVDFFPSGNASVAIEPRLPQADFPEHHHDFHEIVIVEHGTGIHVFNGQPYTITGGTVCFVRDHDRHLYEHTDNLCLTNVLYRSPDRFQFLAGLNQLLPQELDGQYPSHWRVNHSVLQQVRQLVAQMEQQEGENDLPSTASREILFMQLLLLLRKSSLQENLENSASRLNLLLAWLEDHFADEVNWDAVADQFSLSLRTLHRQLKQQTGLTPQRYLNRLRLMKARHLLRHSEASVTDIAYRCGFSDSNHFSTLFHREFNWSPRDIRQGRDGFLQ.

An HTH araC/xylS-type domain is found at 174–272; it reads NLLLAWLEDH…NWSPRDIRQG (99 aa). 2 DNA-binding regions (H-T-H motif) span residues 191–212 and 239–262; these read DAVADQFSLSLRTLHRQLKQQT and VTDIAYRCGFSDSNHFSTLFHREF.

As to quaternary structure, binds DNA as a dimer.

The protein resides in the cytoplasm. Functionally, activates expression of the rhaBAD and rhaT operons. The sequence is that of HTH-type transcriptional activator RhaS from Shigella boydii serotype 18 (strain CDC 3083-94 / BS512).